The following is an 82-amino-acid chain: Hydrogenase maturation factor HybG (82 aa).

Belongs to the HupF/HypC family.

Its pathway is protein modification; [NiFe] hydrogenase maturation. Involved in the maturation of [NiFe] hydrogenases. Involved in the biosynthesis of the Fe(CN)(2)CO cofactor. HybG delivers iron-bound CO(2) to HypD where reduction to CO probably occurs. In complex with HypD, accepts the cyanide ligand generated by HypF and HypE, and also coordinates the carbon monoxide ligand. In Escherichia coli O157:H7, this protein is Hydrogenase maturation factor HybG (hybG).